The chain runs to 158 residues: MSNCFTHINADGNAHMVDVTEKAVTEREARAEAFIDMAPDTLAMIMNGSHHKGDVFATARIAGIQAAKKTSDLIPLCHPLMLTKVEVELEAQPEHNRVRITSLCKLSGKTGVEMEALTAASVAALTIYDMCKAVQKDMIISQVRLLEKRGGKSGHFKA.

Residues 76 to 78 (LCH) and 114 to 115 (ME) each bind substrate. Aspartate 129 is an active-site residue.

The protein belongs to the MoaC family. Homohexamer; trimer of dimers.

The catalysed reaction is (8S)-3',8-cyclo-7,8-dihydroguanosine 5'-triphosphate = cyclic pyranopterin phosphate + diphosphate. Its pathway is cofactor biosynthesis; molybdopterin biosynthesis. Its function is as follows. Catalyzes the conversion of (8S)-3',8-cyclo-7,8-dihydroguanosine 5'-triphosphate to cyclic pyranopterin monophosphate (cPMP). The sequence is that of Cyclic pyranopterin monophosphate synthase from Shewanella frigidimarina (strain NCIMB 400).